Here is a 127-residue protein sequence, read N- to C-terminus: Large ribosomal subunit protein eL32 (127 aa).

Positions 38 to 48 (WRRPKGIDSKM) are enriched in basic and acidic residues. The tract at residues 38 to 66 (WRRPKGIDSKMRLKKKGKPRSPSIGWSSP) is disordered.

This sequence belongs to the eukaryotic ribosomal protein eL32 family.

This Thermococcus gammatolerans (strain DSM 15229 / JCM 11827 / EJ3) protein is Large ribosomal subunit protein eL32.